A 196-amino-acid chain; its full sequence is T-cell surface glycoprotein CD3 epsilon chain (196 aa).

The signal sequence occupies residues 1 to 21 (MPSGNLWKVLGLCLLSVGAWG). Over 22–116 (QEDIERPDED…VCENCVEVDL (95 aa)) the chain is Extracellular. An Ig-like domain is found at 28 to 102 (PDEDTQKTFK…VGEKTSHRLY (75 aa)). Cysteines 49 and 91 form a disulfide. A helical membrane pass occupies residues 117 to 137 (MAVVTIIVVDICITLGLLMVV). Residues 138–196 (YYYSKSRKAKAMPVTRGAGAGGRPRGQNRERPPPVPNPDYEPIRKGQRDLYSGLNQRGR) are Cytoplasmic-facing. The segment at 150–196 (PVTRGAGAGGRPRGQNRERPPPVPNPDYEPIRKGQRDLYSGLNQRGR) is disordered. Positions 164–181 (QNRERPPPVPNPDYEPIR) are NUMB-binding region. An ITAM domain is found at 167-194 (ERPPPVPNPDYEPIRKGQRDLYSGLNQR). The interval 168 to 175 (RPPPVPNP) is proline-rich sequence. A phosphotyrosine mark is found at tyrosine 177 and tyrosine 188.

In terms of assembly, the TCR-CD3 complex is composed of a CD3D/CD3E and a CD3G/CD3E heterodimers that preferentially associate with TCRalpha and TCRbeta, respectively, to form TCRalpha/CD3E/CD3G and TCRbeta/CD3G/CD3E trimers. In turn, the hexamer interacts with CD3Z homodimer to form the TCR-CD3 complex. Alternatively, TCRalpha and TCRbeta can be replaced by TCRgamma and TCRdelta. Interacts with CD6. Interacts (via Proline-rich sequence) with NCK1; the interaction is ligand dependent but independent of tyrosine kinase activation. Post-translationally, phosphorylated on Tyr residues after T-cell receptor triggering by LCK in association with CD4/CD8.

Its subcellular location is the cell membrane. Functionally, part of the TCR-CD3 complex present on T-lymphocyte cell surface that plays an essential role in adaptive immune response. When antigen presenting cells (APCs) activate T-cell receptor (TCR), TCR-mediated signals are transmitted across the cell membrane by the CD3 chains CD3D, CD3E, CD3G and CD3Z. All CD3 chains contain immunoreceptor tyrosine-based activation motifs (ITAMs) in their cytoplasmic domain. Upon TCR engagement, these motifs become phosphorylated by Src family protein tyrosine kinases LCK and FYN, resulting in the activation of downstream signaling pathways. In addition of this role of signal transduction in T-cell activation, CD3E plays an essential role in correct T-cell development. Also participates in internalization and cell surface down-regulation of TCR-CD3 complexes via endocytosis sequences present in CD3E cytosolic region. In addition to its role as a TCR coreceptor, it serves as a receptor for ITPRIPL1. Ligand recognition inhibits T-cell activation by promoting interaction with NCK1, which prevents CD3E-ZAP70 interaction and blocks the ERK-NFkB signaling cascade and calcium influx. The protein is T-cell surface glycoprotein CD3 epsilon chain (CD3E) of Sus scrofa (Pig).